A 480-amino-acid chain; its full sequence is Pyruvate kinase (480 aa).

A substrate-binding site is contributed by Arg-36. Positions 38, 40, and 70 each coordinate K(+). 38 to 41 (NFSH) serves as a coordination point for ATP. The ATP site is built by Arg-77 and Lys-160. A Mg(2+)-binding site is contributed by Glu-225. Substrate-binding residues include Gly-251, Asp-252, and Thr-284. Asp-252 is a Mg(2+) binding site.

Belongs to the pyruvate kinase family. As to quaternary structure, homotetramer. Mg(2+) serves as cofactor. K(+) is required as a cofactor.

It catalyses the reaction pyruvate + ATP = phosphoenolpyruvate + ADP + H(+). It participates in carbohydrate degradation; glycolysis; pyruvate from D-glyceraldehyde 3-phosphate: step 5/5. Its activity is regulated as follows. Allosterically activated by AMP and by several sugar phosphates. Belongs to type II PK. In Buchnera aphidicola subsp. Acyrthosiphon pisum (strain APS) (Acyrthosiphon pisum symbiotic bacterium), this protein is Pyruvate kinase (pykA).